Reading from the N-terminus, the 186-residue chain is Threonylcarbamoyl-AMP synthase (186 aa).

Residues 2 to 186 (PNEFELAVAA…ARTGAIIRPS (185 aa)) form the YrdC-like domain.

Belongs to the SUA5 family. TsaC subfamily.

It is found in the cytoplasm. The enzyme catalyses L-threonine + hydrogencarbonate + ATP = L-threonylcarbamoyladenylate + diphosphate + H2O. Required for the formation of a threonylcarbamoyl group on adenosine at position 37 (t(6)A37) in tRNAs that read codons beginning with adenine. Catalyzes the conversion of L-threonine, HCO(3)(-)/CO(2) and ATP to give threonylcarbamoyl-AMP (TC-AMP) as the acyladenylate intermediate, with the release of diphosphate. This Aeromonas hydrophila subsp. hydrophila (strain ATCC 7966 / DSM 30187 / BCRC 13018 / CCUG 14551 / JCM 1027 / KCTC 2358 / NCIMB 9240 / NCTC 8049) protein is Threonylcarbamoyl-AMP synthase.